The sequence spans 401 residues: E3 ubiquitin-protein ligase DA2 (401 aa).

An RING-type; degenerate zinc finger spans residues 59-102; it reads CPICFLYYPSLNRSRCCMKSICTECFLQMKNPNSARPTQCPFCK. Residues 139-153 are compositionally biased toward basic and acidic residues; that stretch reads KEMQDDEEKMQKRLE. The segment at 139-164 is disordered; it reads KEMQDDEEKMQKRLESCSSSTSAMTG.

Interacts with DA1 (via C-terminus).

The catalysed reaction is S-ubiquitinyl-[E2 ubiquitin-conjugating enzyme]-L-cysteine + [acceptor protein]-L-lysine = [E2 ubiquitin-conjugating enzyme]-L-cysteine + N(6)-ubiquitinyl-[acceptor protein]-L-lysine.. It participates in protein modification; protein ubiquitination. Functionally, E3 ubiquitin-protein ligase involved in the regulation of organ and seed size. Acts synergistically with DA1 to regulate seed size. Functions synergistically with DA1 to restrict cell proliferation in the maternal integuments of ovules and developing seeds. Seems to function independently of BB. Possesses E3 ubiquitin-protein ligase activity in vitro. Polyubiquitinates DA1, DAR1 and DAR2, but not DAR3. The protein is E3 ubiquitin-protein ligase DA2 of Arabidopsis thaliana (Mouse-ear cress).